Consider the following 110-residue polypeptide: Phosphoribosyl-AMP cyclohydrolase (110 aa).

Asp-74 contacts Mg(2+). Cys-75 lines the Zn(2+) pocket. Residues Asp-76 and Asp-78 each coordinate Mg(2+). Positions 91 and 98 each coordinate Zn(2+).

This sequence belongs to the PRA-CH family. As to quaternary structure, homodimer. Requires Mg(2+) as cofactor. It depends on Zn(2+) as a cofactor.

Its subcellular location is the cytoplasm. It catalyses the reaction 1-(5-phospho-beta-D-ribosyl)-5'-AMP + H2O = 1-(5-phospho-beta-D-ribosyl)-5-[(5-phospho-beta-D-ribosylamino)methylideneamino]imidazole-4-carboxamide. It participates in amino-acid biosynthesis; L-histidine biosynthesis; L-histidine from 5-phospho-alpha-D-ribose 1-diphosphate: step 3/9. Functionally, catalyzes the hydrolysis of the adenine ring of phosphoribosyl-AMP. In Lacticaseibacillus casei (strain BL23) (Lactobacillus casei), this protein is Phosphoribosyl-AMP cyclohydrolase.